The primary structure comprises 396 residues: Elongation factor Tu (396 aa).

One can recognise a tr-type G domain in the interval 10 to 206; it reads KPHVNIGTIG…AVDAYIPEPE (197 aa). A G1 region spans residues 19–26; sequence GHVDHGKT. Residue 19-26 coordinates GTP; sequence GHVDHGKT. Thr-26 provides a ligand contact to Mg(2+). Positions 60–64 are G2; sequence GITIS. The G3 stretch occupies residues 81–84; it reads DCPG. Residues 81-85 and 136-139 each bind GTP; these read DCPGH and NKVD. Residues 136-139 form a G4 region; sequence NKVD. The segment at 174–176 is G5; that stretch reads SAL.

It belongs to the TRAFAC class translation factor GTPase superfamily. Classic translation factor GTPase family. EF-Tu/EF-1A subfamily. As to quaternary structure, monomer.

Its subcellular location is the cytoplasm. The enzyme catalyses GTP + H2O = GDP + phosphate + H(+). GTP hydrolase that promotes the GTP-dependent binding of aminoacyl-tRNA to the A-site of ribosomes during protein biosynthesis. In Magnetococcus marinus (strain ATCC BAA-1437 / JCM 17883 / MC-1), this protein is Elongation factor Tu.